Consider the following 350-residue polypeptide: MKQKIIIFGGSFDPIHNAHLYIAKHAIKKIKAQKLFFVPTYNGIFKNNFHASNKDRIAMLKLAIKSVNNALVSNFDIKTKNAFSINTVNHFKSCYPTSEIYFLIGSDKLNELEKWDHIQQLKDLCTFVCYERKPYPFNKKIANQFNVKYLAKCPLEIASSKLLNQPRKKLIPLAVLNYINTNHLYLIPTLKAMVDDKRFQHCLRVGKLAKQLAIANKLDAKRAFVAGAYHDLAKQLPVDQLVNIATSELKITNYPSWKVLHSYVGAYILKNWFGVKDKMIINAIKNHTIPPKQVSKLDMIVYLADKLEPNRKQEQWSGGIEIDQLVKLAKSNLKQAYLITLKYVQNLVKD.

Positions 1 to 187 (MKQKIIIFGG…YINTNHLYLI (187 aa)) are naMN adenylyltransferase. The segment at 196–350 (DKRFQHCLRV…LKYVQNLVKD (155 aa)) is ap4A hydrolase. An HD domain is found at 198-310 (RFQHCLRVGK…VYLADKLEPN (113 aa)). His201 serves as a coordination point for ADP. 3 residues coordinate Fe cation: His201, His230, and Asp231. ADP-binding positions include 231 to 234 (DLAK), His261, 287 to 288 (HT), Asp305, and Arg311. Asp305 is a binding site for Fe cation.

This sequence in the N-terminal section; belongs to the NadD family. In the C-terminal section; belongs to the Ap4A hydrolase YqeK family.

It catalyses the reaction nicotinate beta-D-ribonucleotide + ATP + H(+) = deamido-NAD(+) + diphosphate. The catalysed reaction is P(1),P(4)-bis(5'-adenosyl) tetraphosphate + H2O = 2 ADP + 2 H(+). It participates in cofactor biosynthesis; NAD(+) biosynthesis; deamido-NAD(+) from nicotinate D-ribonucleotide: step 1/1. Catalyzes the reversible adenylation of nicotinate mononucleotide (NaMN) to nicotinic acid adenine dinucleotide (NaAD). Its function is as follows. Hydrolyzes diadenosine 5',5'''-P1,P4-tetraphosphate (Ap4A) to yield ADP. The protein is Probable nicotinate-nucleotide adenylyltransferase/Ap4A hydrolase of Mycoplasma genitalium (strain ATCC 33530 / DSM 19775 / NCTC 10195 / G37) (Mycoplasmoides genitalium).